The primary structure comprises 236 residues: EF-hand domain-containing protein D1 (236 aa).

The segment at 1–48 is disordered; it reads MASEELASKLQRRLQWEEGDSGLQPAPGAAPDPEPQPQPPAWAPTARA. Over residues 28–42 the composition is skewed to pro residues; sequence GAAPDPEPQPQPPAW. EF-hand domains lie at 87-122 and 123-158; these read RLIK…LGAP and QTHL…AAAG. Ca(2+) contacts are provided by aspartate 100, aspartate 104, glutamate 111, aspartate 136, aspartate 138, aspartate 140, lysine 142, and glutamate 147.

It localises to the mitochondrion inner membrane. Its function is as follows. Acts as a calcium sensor for mitochondrial flash (mitoflash) activation, an event characterized by stochastic bursts of superoxide production. May play a role in neuronal differentiation. This chain is EF-hand domain-containing protein D1 (EFHD1), found in Bos taurus (Bovine).